Reading from the N-terminus, the 147-residue chain is MLMPKKVKHRKVQRGRMKGKATRGNFIAYGDYAIQATECGWLTSNQIEAARIAINRYIKRGGKLWIKVFPDKPVTEKPAETRMGSGKGSPEYWVAVVKPGRVLFELSGVPENVAREAMRLASHKLPMKTKFVTRKDFEQTGGEVNEG.

This sequence belongs to the universal ribosomal protein uL16 family. Part of the 50S ribosomal subunit.

Functionally, binds 23S rRNA and is also seen to make contacts with the A and possibly P site tRNAs. The polypeptide is Large ribosomal subunit protein uL16 (Clostridium novyi (strain NT)).